The chain runs to 212 residues: Chloramphenicol acetyltransferase (212 aa).

H186 functions as the Proton acceptor in the catalytic mechanism.

The protein belongs to the chloramphenicol acetyltransferase family. As to quaternary structure, homotrimer.

It catalyses the reaction chloramphenicol + acetyl-CoA = chloramphenicol 3-acetate + CoA. Functionally, this enzyme is an effector of chloramphenicol resistance in bacteria. This Clostridioides difficile (Peptoclostridium difficile) protein is Chloramphenicol acetyltransferase (catD).